The following is a 77-amino-acid chain: Vacuolar ATPase assembly integral membrane protein VMA21 (77 aa).

Residues 1-8 lie on the Cytoplasmic side of the membrane; that stretch reads MAVDVPTS. The chain crosses the membrane as a helical span at residues 9-29; that stretch reads VIVKLMFFTLAMVSFPVLTFF. At 30-41 the chain is on the lumenal side; that stretch reads VSQQYTSNTLVN. A helical transmembrane segment spans residues 42–62; that stretch reads GGLAALAANVVLFAYVIMAFS. Topologically, residues 63 to 77 are cytoplasmic; it reads EDVPQSDGKESKKQQ. Residues 74–77 carry the Prevents secretion from ER motif; that stretch reads KKQQ.

This sequence belongs to the VMA21 family.

Its subcellular location is the endoplasmic reticulum membrane. The protein resides in the endoplasmic reticulum-Golgi intermediate compartment membrane. The protein localises to the cytoplasmic vesicle. It is found in the COPII-coated vesicle membrane. Functionally, required for the assembly of the V0 complex of the vacuolar ATPase (V-ATPase) in the endoplasmic reticulum. This is Vacuolar ATPase assembly integral membrane protein VMA21 from Eremothecium gossypii (strain ATCC 10895 / CBS 109.51 / FGSC 9923 / NRRL Y-1056) (Yeast).